Reading from the N-terminus, the 387-residue chain is Chaperone protein DnaJ (387 aa).

The region spanning 5-70 (DYYEILEVSA…QKRQAYDQFG (66 aa)) is the J domain. The CR-type zinc finger occupies 130 to 208 (GTTVDVRIPT…CRGEGYKHSS (79 aa)). Positions 143, 146, 160, 163, 182, 185, 196, and 199 each coordinate Zn(2+). CXXCXGXG motif repeat units follow at residues 143–150 (CESCDGSG), 160–167 (CPTCQGIG), 182–189 (CPNCHGTG), and 196–203 (CKTCRGEG).

This sequence belongs to the DnaJ family. Homodimer. Zn(2+) serves as cofactor.

The protein resides in the cytoplasm. Participates actively in the response to hyperosmotic and heat shock by preventing the aggregation of stress-denatured proteins and by disaggregating proteins, also in an autonomous, DnaK-independent fashion. Unfolded proteins bind initially to DnaJ; upon interaction with the DnaJ-bound protein, DnaK hydrolyzes its bound ATP, resulting in the formation of a stable complex. GrpE releases ADP from DnaK; ATP binding to DnaK triggers the release of the substrate protein, thus completing the reaction cycle. Several rounds of ATP-dependent interactions between DnaJ, DnaK and GrpE are required for fully efficient folding. Also involved, together with DnaK and GrpE, in the DNA replication of plasmids through activation of initiation proteins. In Hydrogenovibrio crunogenus (strain DSM 25203 / XCL-2) (Thiomicrospira crunogena), this protein is Chaperone protein DnaJ.